A 635-amino-acid chain; its full sequence is Extracellular metalloproteinase 1 (635 aa).

The first 19 residues, 1–19, serve as a signal peptide directing secretion; the sequence is MHGLLLAAGLLSLPLHVLA. The propeptide occupies 20-246; that stretch reads HPQPSTSTSL…VHNVVDYVAH (227 aa). N287 is a glycosylation site (N-linked (GlcNAc...) asparagine). Zn(2+) is bound at residue H430. Residue E431 is part of the active site. Residue H434 participates in Zn(2+) binding. 3 N-linked (GlcNAc...) asparagine glycosylation sites follow: N475, N594, and N623.

This sequence belongs to the peptidase M36 family. It depends on Zn(2+) as a cofactor.

The protein localises to the secreted. Its function is as follows. Secreted metalloproteinase probably acting as a virulence factor. The protein is Extracellular metalloproteinase 1 (MEP1) of Arthroderma benhamiae (Trichophyton mentagrophytes).